The following is a 526-amino-acid chain: Vang-like protein 1 (526 aa).

The span at 1–15 shows a compositional bias: low complexity; it reads MDTESTYSGYSYYSS. The tract at residues 1-87 is disordered; that stretch reads MDTESTYSGY…TTAITGTSEH (87 aa). Residues 1–114 lie on the Cytoplasmic side of the membrane; the sequence is MDTESTYSGY…VGLDCKRYLG (114 aa). A compositionally biased stretch (polar residues) spans 75 to 87; it reads GETTTAITGTSEH. Phosphoserine is present on residues S88 and S90. A helical transmembrane segment spans residues 115–135; it reads LTVASFLGLLVFLTPIAFILL. Residues 136–153 lie on the Extracellular side of the membrane; the sequence is PQILWREELKPCGAICEG. A helical transmembrane segment spans residues 154–174; that stretch reads LLISVSFKLLILLIGTWALFF. The Cytoplasmic segment spans residues 175 to 184; that stretch reads RKQRADVPRV. Residues 185–205 form a helical membrane-spanning segment; it reads FVFRALLLVLIFLFVVSYWLF. Residues 206 to 224 are Extracellular-facing; sequence YGVRILDSRDQNYKDIVQY. Residues 225-245 form a helical membrane-spanning segment; that stretch reads AVSLVDALLFIHYLAIVLLEL. Over 246 to 526 the chain is Cytoplasmic; that stretch reads RQLQPMFTLQ…VLRLQSETSV (281 aa).

The protein belongs to the Vang family. Heterodimer with Vangl2. Interacts through its C-terminal region with the N-terminal half of DVL1, DVL2 and DVL3. The PDZ domain of DVL1, DVL2 and DVL3 is required for the interaction.

It is found in the cell membrane. This chain is Vang-like protein 1 (Vangl1), found in Mus musculus (Mouse).